Consider the following 239-residue polypeptide: N-glycosylase/DNA lyase (239 aa).

Residues Gln24, Ser51, and Trp62 each contribute to the 8-oxoguanine site. The interval 118-182 is helix-hairpin-helix; that stretch reads ERYYEDMTLL…EDVRIIKLTR (65 aa). The Schiff-base intermediate with DNA role is filled by Lys142. Residues Phe146 and Pro172 each coordinate 8-oxoguanine. Asp174 is an active-site residue. 8-oxoguanine is bound by residues Asp208 and Trp212.

It belongs to the archaeal N-glycosylase/DNA lyase (AGOG) family.

It carries out the reaction 2'-deoxyribonucleotide-(2'-deoxyribose 5'-phosphate)-2'-deoxyribonucleotide-DNA = a 3'-end 2'-deoxyribonucleotide-(2,3-dehydro-2,3-deoxyribose 5'-phosphate)-DNA + a 5'-end 5'-phospho-2'-deoxyribonucleoside-DNA + H(+). DNA repair enzyme that is part of the base excision repair (BER) pathway; protects from oxidative damage by removing the major product of DNA oxidation, 8-oxoguanine (GO), from single- and double-stranded DNA substrates. This chain is N-glycosylase/DNA lyase, found in Pyrococcus horikoshii (strain ATCC 700860 / DSM 12428 / JCM 9974 / NBRC 100139 / OT-3).